Consider the following 273-residue polypeptide: Oligodendrocyte transcription factor 3 (273 aa).

Low complexity predominate over residues 1 to 14 (MNSDSSSVSSRASS). Residues 1–72 (MNSDSSSVSS…KAAGESSKYK (72 aa)) are disordered. The segment covering 24–34 (DHHHRHHHHHQ) has biased composition (basic residues). Over residues 37–47 (RLNSVSSTQGD) the composition is skewed to polar residues. Residues 69–90 (SKYKIKKQLSEQDLQQLRLKIN) adopt a coiled-coil conformation. Positions 84–138 (QLRLKINGRERKRMHDLNLAMDGLREVMPYAHGPSVRKLSKIATLLLARNYILML) constitute a bHLH domain.

In terms of tissue distribution, weakly expressed, mainly in non-neural tissues.

The protein resides in the nucleus. In terms of biological role, may determine the distinct specification program of class A neurons in the dorsal part of the spinal cord and suppress specification of class B neurons. This is Oligodendrocyte transcription factor 3 (Olig3) from Mus musculus (Mouse).